The sequence spans 1603 residues: Transcription factor Gibbin (1603 aa).

Disordered stretches follow at residues 19–108, 150–236, 264–285, and 394–467; these read PDYL…SSSR, LRLS…STDY, LEPPSPEPEPQLLDPQPRFLDP, and CRRR…RKGK. Residues 30–47 show a composition bias toward pro residues; that stretch reads GGPPTPRPLLPTRPPASP. Lys-79 carries the N6-acetyllysine modification. Positions 166-178 are enriched in polar residues; that stretch reads SFFSSPSLANSIR. Residues 179-194 show a composition bias toward basic and acidic residues; sequence SPEERATPHAKSERPS. The span at 216-225 shows a compositional bias: low complexity; the sequence is PGATAAATGL. The residue at position 268 (Ser-268) is a Phosphoserine. Residues 273–285 show a composition bias toward low complexity; sequence PQLLDPQPRFLDP. The segment at residues 396-408 is a DNA-binding region (a.T hook 1); the sequence is RRKAGRGRKADAG. Over residues 428-446 the composition is skewed to pro residues; the sequence is EPPPPPPPPPPALPGPGPV. Positions 544–556 form a DNA-binding region, a.T hook 2; it reads KRKRGRPPKNLLL. Residues 581-607 form a disordered region; it reads MPEVKKRRRRKQKLASPQPSYAADAND. Ser-596 bears the Phosphoserine mark. Residue Lys-609 forms a Glycyl lysine isopeptide (Lys-Gly) (interchain with G-Cter in SUMO2) linkage. 2 disordered regions span residues 717-792 and 806-827; these read LTEL…RNCG and LESGASGRGSYYSTGAPSGQTE. Residues 737 to 746 are compositionally biased toward basic residues; it reads KPKRKRRSRK. A compositionally biased stretch (polar residues) spans 816–827; it reads YYSTGAPSGQTE. Phosphoserine occurs at positions 829 and 846. Arg-891 carries the post-translational modification Omega-N-methylarginine. Ser-896 and Ser-1064 each carry phosphoserine. 2 disordered regions span residues 1159–1198 and 1253–1286; these read VSETFSESSSDSTQFNQPVGGGGFRRANSEASSSEGQSSL and ASAAASGYPSKRSTGPRQPRGGRGGGACSAKKER. Low complexity-rich tracts occupy residues 1160–1171 and 1187–1198; these read SETFSESSSDST and SEASSSEGQSSL. Ser-1187 carries the post-translational modification Phosphoserine. 3 positions are modified to phosphoserine: Ser-1322, Ser-1324, and Ser-1399. A Phosphothreonine modification is found at Thr-1401. The residue at position 1403 (Ser-1403) is a Phosphoserine. Residue Lys-1409 forms a Glycyl lysine isopeptide (Lys-Gly) (interchain with G-Cter in SUMO2) linkage. A disordered region spans residues 1503-1533; sequence PHLASPPATPKADKEPLEMARPPGPPRGPAA. Ser-1507 and Ser-1549 each carry phosphoserine.

It localises to the nucleus. The protein resides in the chromosome. Its function is as follows. Transcription factor required for the proper patterning of the epidermis, which plays a key role in early epithelial morphogenesis. Directly binds promoter and enhancer regions and acts by maintaining local enhancer-promoter chromatin architecture. Interacts with many sequence-specific zinc-finger transcription factors and methyl-CpG-binding proteins to regulate the expression of mesoderm genes that wire surface ectoderm stratification. This chain is Transcription factor Gibbin, found in Homo sapiens (Human).